We begin with the raw amino-acid sequence, 243 residues long: Ubiquinone/menaquinone biosynthesis C-methyltransferase UbiE (243 aa).

S-adenosyl-L-methionine-binding positions include Thr69, Asp90, and 116 to 117 (DA).

Belongs to the class I-like SAM-binding methyltransferase superfamily. MenG/UbiE family.

The enzyme catalyses a 2-demethylmenaquinol + S-adenosyl-L-methionine = a menaquinol + S-adenosyl-L-homocysteine + H(+). It carries out the reaction a 2-methoxy-6-(all-trans-polyprenyl)benzene-1,4-diol + S-adenosyl-L-methionine = a 5-methoxy-2-methyl-3-(all-trans-polyprenyl)benzene-1,4-diol + S-adenosyl-L-homocysteine + H(+). Its pathway is quinol/quinone metabolism; menaquinone biosynthesis; menaquinol from 1,4-dihydroxy-2-naphthoate: step 2/2. It participates in cofactor biosynthesis; ubiquinone biosynthesis. Its function is as follows. Methyltransferase required for the conversion of demethylmenaquinol (DMKH2) to menaquinol (MKH2) and the conversion of 2-polyprenyl-6-methoxy-1,4-benzoquinol (DDMQH2) to 2-polyprenyl-3-methyl-6-methoxy-1,4-benzoquinol (DMQH2). This Paraburkholderia xenovorans (strain LB400) protein is Ubiquinone/menaquinone biosynthesis C-methyltransferase UbiE.